The following is a 140-amino-acid chain: Putative pre-16S rRNA nuclease (140 aa).

It belongs to the YqgF nuclease family.

It is found in the cytoplasm. Functionally, could be a nuclease involved in processing of the 5'-end of pre-16S rRNA. The chain is Putative pre-16S rRNA nuclease from Aeromonas salmonicida (strain A449).